Reading from the N-terminus, the 350-residue chain is MLPSLQSLTKKVLAGQCVPTNQHYLLKCYDLWWHDGPITFDHNLKLIKSAGIKEGLDLNTALVKAVRENNYNLIKLFAEWGANINYGLVSVNTEHTWDLCRELGAKETLNEEEILQIFIDLKFHKTSSNIILCHEVFSNNPILQKVNNIKMRIEIFWELRELIEKTDLLNNEFSLSTLLLKYWYAIAIRYNLKEAIQYFYQKYTHLNTWRLTCALCFNNVFDLHEAYEKDKIHMDIEEMMRIACIKDHNLSTMYYCYVLGGNINQAMLTSIQYYNIENMFFCMDLGADAFEEGTIALGEGYKLIKNILSLKIYSPATTPLPKSTDPEIIDHALKNYVSKNMMIFLTYDLR.

The ANK repeat unit spans residues 57-89 (DLNTALVKAVRENNYNLIKLFAEWGANINYGLV).

The protein belongs to the asfivirus MGF 360 family.

Functionally, plays a role in virus cell tropism, and may be required for efficient virus replication in macrophages. This is Protein MGF 360-12L from Ornithodoros (relapsing fever ticks).